The following is a 175-amino-acid chain: Inorganic pyrophosphatase (175 aa).

Substrate is bound by residues Lys30, Arg44, and Tyr56. 3 residues coordinate Mg(2+): Asp66, Asp71, and Asp103. A substrate-binding site is contributed by Tyr142.

The protein belongs to the PPase family. In terms of assembly, homohexamer. Mg(2+) is required as a cofactor.

It is found in the cytoplasm. The catalysed reaction is diphosphate + H2O = 2 phosphate + H(+). Functionally, catalyzes the hydrolysis of inorganic pyrophosphate (PPi) forming two phosphate ions. This chain is Inorganic pyrophosphatase, found in Yersinia pestis.